A 550-amino-acid chain; its full sequence is Ribosomal protein S6 kinase beta (550 aa).

Residues F83 to F344 form the Protein kinase domain. ATP contacts are provided by residues L89–V97 and K115. Catalysis depends on D210, which acts as the Proton acceptor. Residues K345–N415 enclose the AGC-kinase C-terminal domain. T404 carries the phosphothreonine modification. Disordered stretches follow at residues R433–S466 and T484–M550. S439 bears the Phosphoserine mark. Residues T520–N534 show a composition bias toward low complexity.

Belongs to the protein kinase superfamily. AGC Ser/Thr protein kinase family. S6 kinase subfamily. It depends on Mg(2+) as a cofactor. May be phosphorylated on Thr-404 by let-363/TOR.

It localises to the cell projection. It is found in the axon. Its subcellular location is the perikaryon. It catalyses the reaction L-seryl-[protein] + ATP = O-phospho-L-seryl-[protein] + ADP + H(+). The enzyme catalyses L-threonyl-[protein] + ATP = O-phospho-L-threonyl-[protein] + ADP + H(+). Functionally, serine/threonine-protein kinase which regulates mRNA translation. Negatively regulates lifespan and resistance to starvation, oxidative stress, protein aggregation and P.aeruginosa-mediated infection. May regulate these processes by preventing the activation of transcription factor hif-1. Required, probably downstream of let-363/TOR, for the establishment of the proper number of germline progenitors by promoting cell cycle progression and preventing differentiation during larval development. Regulates germ cell size. In addition required for sperm production and embryo viability. Involved in axon regeneration of PLM and ALM neurons by inhibiting growth cone formation early after axotomy and later by inhibiting axon extension. Functions in axon regeneration and lifespan probably by preventing aak-2/AMPK activation. Negatively regulates autophagy. The protein is Ribosomal protein S6 kinase beta of Caenorhabditis elegans.